Reading from the N-terminus, the 248-residue chain is 4-hydroxy-tetrahydrodipicolinate reductase (248 aa).

NAD(+) contacts are provided by residues D32, 74 to 76 (GTT), and 99 to 102 (SANF). H134 acts as the Proton donor/acceptor in catalysis. H135 lines the (S)-2,3,4,5-tetrahydrodipicolinate pocket. K138 acts as the Proton donor in catalysis. (S)-2,3,4,5-tetrahydrodipicolinate is bound at residue 144–145 (GT).

This sequence belongs to the DapB family.

The protein localises to the cytoplasm. The catalysed reaction is (S)-2,3,4,5-tetrahydrodipicolinate + NAD(+) + H2O = (2S,4S)-4-hydroxy-2,3,4,5-tetrahydrodipicolinate + NADH + H(+). It catalyses the reaction (S)-2,3,4,5-tetrahydrodipicolinate + NADP(+) + H2O = (2S,4S)-4-hydroxy-2,3,4,5-tetrahydrodipicolinate + NADPH + H(+). Its pathway is amino-acid biosynthesis; L-lysine biosynthesis via DAP pathway; (S)-tetrahydrodipicolinate from L-aspartate: step 4/4. Catalyzes the conversion of 4-hydroxy-tetrahydrodipicolinate (HTPA) to tetrahydrodipicolinate. This chain is 4-hydroxy-tetrahydrodipicolinate reductase, found in Chlorobium limicola (strain DSM 245 / NBRC 103803 / 6330).